Reading from the N-terminus, the 542-residue chain is Isocitrate lyase (542 aa).

102-104 provides a ligand contact to substrate; the sequence is SGW. Mg(2+) is bound at residue aspartate 170. The Proton acceptor role is filled by cysteine 208. Substrate contacts are provided by residues 209–210, arginine 245, 428–432, and threonine 462; these read GH and NLSPS.

The protein belongs to the isocitrate lyase/PEP mutase superfamily. Isocitrate lyase family. In terms of assembly, homotetramer. The cofactor is Mg(2+).

The protein localises to the glyoxysome. The catalysed reaction is D-threo-isocitrate = glyoxylate + succinate. It catalyses the reaction (2S,3R)-3-hydroxybutane-1,2,3-tricarboxylate = pyruvate + succinate. Its pathway is carbohydrate metabolism; glyoxylate cycle; (S)-malate from isocitrate: step 1/2. Its function is as follows. Catalyzes the formation of succinate and glyoxylate from isocitrate, a key step of the glyoxylate cycle, which operates as an anaplerotic route for replenishing the tricarboxylic acid cycle. Required for growth on ethanol or acetate, but dispensable when fermentable carbon sources are available. Also acts on 2-methylisocitrate. The chain is Isocitrate lyase from Kluyveromyces lactis (strain ATCC 8585 / CBS 2359 / DSM 70799 / NBRC 1267 / NRRL Y-1140 / WM37) (Yeast).